Reading from the N-terminus, the 595-residue chain is DNA damage-binding protein CMR1 (595 aa).

The interval 20–79 (ALLDSLGLDPAGASSPFGSSPAPTSNKTKPKPKPAPKKRKAAAVIAVDEGPRRRSGRIAG) is disordered. The span at 29–46 (PAGASSPFGSSPAPTSNK) shows a compositional bias: low complexity. Basic residues predominate over residues 47-60 (TKPKPKPAPKKRKA). 4 WD repeats span residues 185–226 (VTNE…MEKP), 255–297 (HAKN…ELFS), 300–339 (DEDL…RESG), and 349–389 (GRGA…SISS). The segment at 397 to 429 (AIEEEEEGTSTLSGQSSSLPHDTHPTRESDYST) is disordered. Low complexity predominate over residues 405–415 (TSTLSGQSSSL). A compositionally biased stretch (basic and acidic residues) spans 417-426 (HDTHPTRESD). WD repeat units follow at residues 448-487 (QHGK…SLVD), 519-556 (LRAQ…VGLW), and 558-595 (DDVT…GDHI).

This sequence belongs to the WD repeat DDB2/WDR76 family.

Functionally, DNA-binding protein that binds to both single- and double-stranded DNA. Binds preferentially to UV-damaged DNA. May be involved in DNA-metabolic processes. This Cryptococcus neoformans var. neoformans serotype D (strain B-3501A) (Filobasidiella neoformans) protein is DNA damage-binding protein CMR1.